We begin with the raw amino-acid sequence, 302 residues long: Oxygen-dependent coproporphyrinogen-III oxidase (302 aa).

Substrate is bound at residue Ser-94. 2 residues coordinate a divalent metal cation: His-98 and His-108. His-108 functions as the Proton donor in the catalytic mechanism. 110–112 (NVR) serves as a coordination point for substrate. A divalent metal cation-binding residues include His-147 and His-177. The important for dimerization stretch occupies residues 242 to 277 (YVEFNLVFDRGTLFGLQSGGRAESILMSMPPVANWR). Position 260–262 (260–262 (GGR)) interacts with substrate.

It belongs to the aerobic coproporphyrinogen-III oxidase family. Homodimer. Requires a divalent metal cation as cofactor.

The protein resides in the cytoplasm. It catalyses the reaction coproporphyrinogen III + O2 + 2 H(+) = protoporphyrinogen IX + 2 CO2 + 2 H2O. Its pathway is porphyrin-containing compound metabolism; protoporphyrin-IX biosynthesis; protoporphyrinogen-IX from coproporphyrinogen-III (O2 route): step 1/1. Functionally, involved in the heme biosynthesis. Catalyzes the aerobic oxidative decarboxylation of propionate groups of rings A and B of coproporphyrinogen-III to yield the vinyl groups in protoporphyrinogen-IX. This is Oxygen-dependent coproporphyrinogen-III oxidase from Ralstonia pickettii (strain 12J).